The sequence spans 344 residues: MGLKEDLKALEEEAKKLIEEASDIGKLNDIRVNYLGKKGKIKSILKTLGKLSPEERKEIGQLANRIKDELEEALKEKTELLKKKALEEELRKNRIDITLPPQWIESGSSHPVISTLIEISQIFISMGFSVAEGPEVEKEKYNFDMLNIPPDHPARDMQDTFFLNNGDILRTHTSPVQIRTMLKHKPPIAVIAPGRVYRKDADPTHSPMFHQIEGLLVDRDVTFRDLKGILKIFLESVFGKDTKIRFRPSYFPFTEPSAEVDIGCTVCGGKGCRVCKGTGWLEILGCGMVDPEVFKAVGIDPEEYTGFAFGLGIERIAMLKYRITDIRLLFTGDMRFNQQFKGIR.

Residue E255 coordinates Mg(2+).

This sequence belongs to the class-II aminoacyl-tRNA synthetase family. Phe-tRNA synthetase alpha subunit type 1 subfamily. As to quaternary structure, tetramer of two alpha and two beta subunits. The cofactor is Mg(2+).

It localises to the cytoplasm. The enzyme catalyses tRNA(Phe) + L-phenylalanine + ATP = L-phenylalanyl-tRNA(Phe) + AMP + diphosphate + H(+). This chain is Phenylalanine--tRNA ligase alpha subunit, found in Persephonella marina (strain DSM 14350 / EX-H1).